A 458-amino-acid chain; its full sequence is Exodeoxyribonuclease 7 large subunit (458 aa).

Belongs to the XseA family. As to quaternary structure, heterooligomer composed of large and small subunits.

The protein resides in the cytoplasm. The enzyme catalyses Exonucleolytic cleavage in either 5'- to 3'- or 3'- to 5'-direction to yield nucleoside 5'-phosphates.. Functionally, bidirectionally degrades single-stranded DNA into large acid-insoluble oligonucleotides, which are then degraded further into small acid-soluble oligonucleotides. In Yersinia enterocolitica serotype O:8 / biotype 1B (strain NCTC 13174 / 8081), this protein is Exodeoxyribonuclease 7 large subunit.